Consider the following 687-residue polypeptide: Amine oxidase [copper-containing] gamma 2 (687 aa).

A signal peptide spans 1–24 (MVELSFSQLLVLLLSLLFLFTTLA). Residue asparagine 154 is glycosylated (N-linked (GlcNAc...) asparagine). An intrachain disulfide couples cysteine 169 to cysteine 191. N-linked (GlcNAc...) asparagine glycosylation occurs at asparagine 244. 333–344 (YMDAGEFGLGPS) contacts substrate. Aspartate 335 acts as the Proton acceptor in catalysis. The cysteines at positions 354 and 380 are disulfide-linked. A substrate-binding site is contributed by 420–425 (VGNYDY). Residue tyrosine 423 is the Schiff-base intermediate with substrate; via topaquinone of the active site. Tyrosine 423 is subject to 2',4',5'-topaquinone. Cu cation-binding residues include histidine 480 and histidine 482. Mn(2+) is bound by residues aspartate 489, methionine 490, and aspartate 491. N-linked (GlcNAc...) asparagine glycans are attached at residues asparagine 497 and asparagine 598. Residues aspartate 632 and isoleucine 633 each contribute to the Mn(2+) site. Histidine 643 is a binding site for Cu cation.

It belongs to the copper/topaquinone oxidase family. Homodimer. Cu cation serves as cofactor. Requires Zn(2+) as cofactor. L-topaquinone is required as a cofactor. It depends on Mn(2+) as a cofactor. In terms of processing, topaquinone (TPQ) is generated by copper-dependent autoxidation of a specific tyrosyl residue. In terms of tissue distribution, expressed in roots, leaves and cotyledons.

It localises to the secreted. It is found in the extracellular space. The protein localises to the apoplast. It carries out the reaction a primary methyl amine + O2 + H2O = an aldehyde + H2O2 + NH4(+). It participates in amine and polyamine degradation; putrescine degradation. Copper amine oxidase that can use putrescine and spermidine as substrates. This chain is Amine oxidase [copper-containing] gamma 2, found in Arabidopsis thaliana (Mouse-ear cress).